A 142-amino-acid polypeptide reads, in one-letter code: Hemoglobin subunit alpha-A (142 aa).

A Globin domain is found at 2-142 (VLSPTDKSIV…VSTVLTSKYR (141 aa)). An O2-binding site is contributed by His59. Residue His88 coordinates heme b.

It belongs to the globin family. Heterotetramer of two alpha chains and two beta chains. As to expression, red blood cells.

Involved in oxygen transport from the lung to the various peripheral tissues. This Otolemur crassicaudatus (Brown greater galago) protein is Hemoglobin subunit alpha-A (HBAA).